The chain runs to 268 residues: Type II methyltransferase M2.DpnII (268 aa).

This sequence belongs to the N(4)/N(6)-methyltransferase family. Homodimer.

It catalyses the reaction a 2'-deoxyadenosine in DNA + S-adenosyl-L-methionine = an N(6)-methyl-2'-deoxyadenosine in DNA + S-adenosyl-L-homocysteine + H(+). Functionally, a beta subtype methylase that recognizes the single- or double-stranded sequence 5'-GATC-3', methylates A-2 on one or both strands (respectively), and protects the DNA from cleavage by the DpnII endonuclease. Further methylates DNA that is already methylated at 5'-GATC-3' sites. Essential for establishment of a previously unmethylated plasmid transformed into the cell as single-stranded DNA, enhances plasmid transfer to DpnII-containing strains of Streptococcus pneumoniae. The sequence is that of Type II methyltransferase M2.DpnII from Streptococcus pneumoniae.